Reading from the N-terminus, the 155-residue chain is Small ribosomal subunit protein uS7cz/uS7cy (155 aa).

It belongs to the universal ribosomal protein uS7 family. In terms of assembly, part of the 30S ribosomal subunit.

It is found in the plastid. In terms of biological role, one of the primary rRNA binding proteins, it binds directly to 16S rRNA where it nucleates assembly of the head domain of the 30S subunit. The sequence is that of Small ribosomal subunit protein uS7cz/uS7cy (rps7-A) from Cuscuta exaltata (Tall dodder).